Consider the following 487-residue polypeptide: NADH-quinone oxidoreductase subunit N (487 aa).

14 helical membrane-spanning segments follow: residues 16-36 (VIMPEVILSVLGMALLLVNVF), 45-65 (LAWLSLIGIVGAGFAAVTGWG), 79-99 (NFAIFFKIIFLLAAGLAVLIS), 111-131 (GELYPIILFTTVGMMLMAAAT), 133-153 (LMTIFLGLELMSISLYVLAGF), 168-188 (FLLGAFSTGFLLYGMALIYGV), 212-232 (LLIGMFLMLTGFLFKIAAAPF), 257-276 (AAGFAAMLRLLLVAFPAMIA), 281-298 (LLWILAVLTMTVGNFTAL), 306-326 (MLAYSSIAHAGYCLVGFASGT), 333-353 (ILFYMLSYTFMNIGAFAVIVL), 378-398 (ALAMTVFMFSLAGMPPTAGFI), 413-435 (IWLAIIGVLNSAASVYYYLRVIV), and 457-477 (LALVVSAAGSLIPGIIPSMIL).

Belongs to the complex I subunit 2 family. NDH-1 is composed of 14 different subunits. Subunits NuoA, H, J, K, L, M, N constitute the membrane sector of the complex.

It is found in the cell inner membrane. It carries out the reaction a quinone + NADH + 5 H(+)(in) = a quinol + NAD(+) + 4 H(+)(out). NDH-1 shuttles electrons from NADH, via FMN and iron-sulfur (Fe-S) centers, to quinones in the respiratory chain. The immediate electron acceptor for the enzyme in this species is believed to be ubiquinone. Couples the redox reaction to proton translocation (for every two electrons transferred, four hydrogen ions are translocated across the cytoplasmic membrane), and thus conserves the redox energy in a proton gradient. This chain is NADH-quinone oxidoreductase subunit N, found in Trichlorobacter lovleyi (strain ATCC BAA-1151 / DSM 17278 / SZ) (Geobacter lovleyi).